The sequence spans 4001 residues: Ankyrin repeat and KH domain-containing protein mask (4001 aa).

The span at 1–14 (MNNDAKNHESDDLN) shows a compositional bias: basic and acidic residues. Disordered regions lie at residues 1 to 61 (MNND…NRQL), 91 to 174 (KNEP…GGGS), and 391 to 494 (DTDT…FLLD). The segment covering 15-30 (VRSTAYFNQQTTTNQP) has biased composition (polar residues). Residues 38–61 (NNTGSGSGSNNNNNNTNQNPNRQL) show a composition bias toward low complexity. Positions 94-117 (PLTTTESSGVLTNTPLPSNSRLKV) are enriched in polar residues. Residues 118–159 (NNNNNTNNTAKMSGTSSSQSSATPTPPTASSSTTTTTTTNIS) are compositionally biased toward low complexity. The segment covering 160-174 (TGGGGSGSSGGGGGS) has biased composition (gly residues). Composition is skewed to acidic residues over residues 408–425 (SESE…ESDP) and 434–486 (VRED…EDAP). Position 501 is a phosphoserine (Ser501). ANK repeat units follow at residues 546–575 (SGFS…NVNL), 584–614 (DGES…QVED), 618–647 (KDST…DVNA), 651–680 (TGNT…NVEE), 684–713 (NGHT…GINT), 718–747 (FKES…DQEH), 751–780 (EMHT…QVNM), 784–813 (SFES…NIEE), 817–846 (EGYT…NINA), 851–880 (TQET…NLEL), 881–910 (GAST…NVHA), 914–943 (TGDT…ELEH), 947–976 (GGRT…NVNK), 981–1011 (NDHT…PFHK), and 1014–1043 (DNST…ISPT). 2 disordered regions span residues 1046–1067 (AASA…NQMR) and 1306–1376 (QPGE…PTAL). Residues 1367-1376 (DNNQPVPTAL) show a composition bias toward polar residues. Phosphoserine is present on residues Ser1389 and Ser1588. Disordered regions lie at residues 1583-1612 (GDQP…RLGS), 1646-1669 (SDLE…ENTL), 1682-1779 (EDGI…SLPL), 1852-1872 (VVHQ…DGSA), 2084-2108 (MAQH…QQLH), and 2225-2256 (TPAP…KERR). Composition is skewed to acidic residues over residues 1646 to 1657 (SDLESECEDDAE), 1685 to 1704 (IIVE…EEQD), and 1716 to 1759 (DDED…EPDS). The span at 1760-1776 (DQGTGNNNNNSKSGASS) shows a compositional bias: low complexity. The span at 2084 to 2093 (MAQHQAQQQQ) shows a compositional bias: low complexity. Positions 2228-2237 (PSSGVSSTKS) are enriched in polar residues. ANK repeat units lie at residues 2312–2341 (NHDT…NIEH), 2345–2374 (KGFT…ELEA), 2379–2408 (TKDT…NKEH), 2412–2441 (SDYT…EINS), 2447–2476 (LGIS…DINA), 2481–2510 (NRNT…NVEH), 2514–2543 (TGLT…DVNA), 2549–2578 (SRDT…SVEV), 2582–2611 (KGNS…DIDS), and 2615–2644 (RRVS…QFPS). The stretch at 2674–2732 (AKEAQAVKANKNASILLEELDLERTREESRKAAAARRRERKKKKKMEKKEEKRRQQQGN) forms a coiled coil. Ser2687 bears the Phosphoserine mark. The residue at position 2698 (Thr2698) is a Phosphothreonine. A disordered region spans residues 2699-3033 (REESRKAAAA…TSTTTAASSV (335 aa)). The span at 2706–2719 (AAARRRERKKKKKM) shows a compositional bias: basic residues. A compositionally biased stretch (acidic residues) spans 2739–2762 (MQGDDDDASDKDDDSDKDDEDEEA). Residues Ser2747 and Ser2753 each carry the phosphoserine modification. Positions 2793-2810 (SQSAQAAEAAANSVSTNS) are enriched in low complexity. Residues 2828–2839 (EPTQPVITSNSV) show a composition bias toward polar residues. The segment covering 2868 to 2886 (RQLDVKKEEPALKKKEEKN) has biased composition (basic and acidic residues). Positions 2906–2941 (ALPAKQQPSSSSKLQSSESASNINSSTATNTSSANT) are enriched in low complexity. Polar residues predominate over residues 2950–2960 (ASQTASATTLN). Basic and acidic residues predominate over residues 2963–2975 (KRTEVDGWKEVVR). A compositionally biased stretch (polar residues) spans 2995–3004 (TATSSATSVQ). A compositionally biased stretch (low complexity) spans 3012–3032 (ANSSSNSSSSLTTSTTTAASS). Residues 3036–3100 (MTCKKVQVPV…DATKQAHMLI (65 aa)) enclose the KH domain. Low complexity-rich tracts occupy residues 3156–3178 (ASTT…ASYS), 3195–3227 (SGRS…AGSS), and 3244–3257 (NGVI…SSKS). 4 disordered regions span residues 3156–3329 (ASTT…GQGG), 3383–3457 (KPIA…QTSQ), 3520–3636 (AVGD…PPTA), and 3744–3786 (IFPQ…GGAA). Residues 3262–3278 (QKSSTTLGKSSTVSPGA) are compositionally biased toward polar residues. The span at 3396–3416 (GSPTQVQQQHQTQQQQQQQLP) shows a compositional bias: low complexity. The span at 3417–3427 (QPAPVPGPQPQ) shows a compositional bias: pro residues. Positions 3428–3457 (QQPLQQQQQQQAPQQQPQQPNQQQQPQTSQ) are enriched in low complexity. Positions 3539–3559 (NILSSPVGSSKASSNHSTSPP) are enriched in polar residues. The span at 3565–3577 (QQQQQQQPQSSQQ) shows a compositional bias: low complexity. Residue Ser3596 is modified to Phosphoserine. Low complexity predominate over residues 3774 to 3786 (PPGTGARQPGGAA). Phosphoserine is present on residues Ser3820, Ser3822, and Ser3825. The disordered stretch occupies residues 3876-3945 (KAQPPGLQQP…HNMQAPPNMS (70 aa)). Positions 3891 to 3910 (SQQQQQQPLNWLKQQPQQQQ) are enriched in low complexity.

As to quaternary structure, may interact with Unc-89 (via protein kinase domain 1 or 2). In terms of tissue distribution, expressed ubiquitously in eye imaginal disk, slightly higher expression is seen in presumptive photoreceptors. Expressed in indirect flight muscle (IFM) (at protein level).

The protein localises to the cytoplasm. The protein resides in the myofibril. Its subcellular location is the sarcomere. It is found in the z line. It localises to the m line. Mediator of receptor tyrosine kinase (RTK) signaling, and may act either downstream of MAPK or transduce signaling through a parallel branch of the RTK pathway. Required for the development and organization of indirect flight muscle sarcomeres by regulating the formation of M line and H zone and the correct assembly of thick and thin filaments in the sarcomere. The sequence is that of Ankyrin repeat and KH domain-containing protein mask from Drosophila melanogaster (Fruit fly).